We begin with the raw amino-acid sequence, 324 residues long: MFTTAFAQREQTQPGGLPLDLFAAIDSLKKELNAVILAHYYQEPDIQDIADFIGDSLQLARAAAKTNADVIVFAGVHFMAETAKILNPEKLVLLPDLNAGCSLADSCPPKEFAAFKAAHPDHLVVSYINCSAEIKAMSDIICTSSNAVKIVQQIPKEQPIIFAPDRNLGRYVMEQTGRDLVLWQGSCLVHETFSEKKIVQLKVAHPQAEAIAHPECESSVLRHASFIGSTAALLQYCQTSPSQEFIVATEPGIIHQMQKLAPNKHFIPAPPINNCACNECPFMRLNTLEKLYWAMKNRTPEITMSEDIRIAALRPMQRMLEMSN.

Histidine 39 and serine 56 together coordinate iminosuccinate. Residue cysteine 101 coordinates [4Fe-4S] cluster. Iminosuccinate is bound by residues 127–129 (YIN) and serine 144. Residue cysteine 187 coordinates [4Fe-4S] cluster. Residues 213-215 (HPE) and threonine 230 each bind iminosuccinate. Cysteine 280 contributes to the [4Fe-4S] cluster binding site.

It belongs to the quinolinate synthase family. Type 2 subfamily. [4Fe-4S] cluster is required as a cofactor.

The protein localises to the cytoplasm. It catalyses the reaction iminosuccinate + dihydroxyacetone phosphate = quinolinate + phosphate + 2 H2O + H(+). It functions in the pathway cofactor biosynthesis; NAD(+) biosynthesis; quinolinate from iminoaspartate: step 1/1. In terms of biological role, catalyzes the condensation of iminoaspartate with dihydroxyacetone phosphate to form quinolinate. The protein is Quinolinate synthase of Trichormus variabilis (strain ATCC 29413 / PCC 7937) (Anabaena variabilis).